Here is a 476-residue protein sequence, read N- to C-terminus: Tubulointerstitial nephritis antigen (476 aa).

Asparagine 38 is a glycosylation site (N-linked (GlcNAc...) asparagine). The SMB domain maps to 59–107 (RFGCCADRDDGCVTQFYEADALCYCDKFCERENSDCCPDYKSFCREEKG). Cystine bridges form between cysteine 63–cysteine 83 and cysteine 87–cysteine 94. Residues asparagine 175, asparagine 314, asparagine 360, and asparagine 455 are each glycosylated (N-linked (GlcNAc...) asparagine).

The protein belongs to the peptidase C1 family.

The protein resides in the secreted. It localises to the extracellular space. The protein localises to the extracellular matrix. It is found in the basement membrane. Its function is as follows. Mediates adhesion of proximal tubule epithelial cells via integrins alpha3-beta1 and alphaV-beta3. This is a non catalytic peptidase C1 family protein. This Bos taurus (Bovine) protein is Tubulointerstitial nephritis antigen (TINAG).